A 37-amino-acid chain; its full sequence is Cytochrome b6-f complex subunit 5 (37 aa).

A helical membrane pass occupies residues 5–25; the sequence is LLSGIVLGLIPVTLAGLFVTA.

Belongs to the PetG family. The 4 large subunits of the cytochrome b6-f complex are cytochrome b6, subunit IV (17 kDa polypeptide, PetD), cytochrome f and the Rieske protein, while the 4 small subunits are PetG, PetL, PetM and PetN. The complex functions as a dimer.

It is found in the plastid. It localises to the chloroplast thylakoid membrane. In terms of biological role, component of the cytochrome b6-f complex, which mediates electron transfer between photosystem II (PSII) and photosystem I (PSI), cyclic electron flow around PSI, and state transitions. PetG is required for either the stability or assembly of the cytochrome b6-f complex. This is Cytochrome b6-f complex subunit 5 from Chlorokybus atmophyticus (Soil alga).